A 114-amino-acid polypeptide reads, in one-letter code: Secretoglobin family 2B member 2 (114 aa).

A signal peptide spans 1 to 23 (MKGTLLLLALLVTGELGFQRTEA).

It belongs to the secretoglobin family. Expressed in lacrimal gland.

The protein resides in the secreted. The polypeptide is Secretoglobin family 2B member 2 (Scgb2b2) (Mus musculus (Mouse)).